We begin with the raw amino-acid sequence, 64 residues long: Large ribosomal subunit protein uL30 (64 aa).

Belongs to the universal ribosomal protein uL30 family. Part of the 50S ribosomal subunit.

The chain is Large ribosomal subunit protein uL30 from Syntrophus aciditrophicus (strain SB).